Reading from the N-terminus, the 428-residue chain is Serine--tRNA ligase (428 aa).

235 to 237 (TAE) serves as a coordination point for L-serine. 266-268 (RSE) contributes to the ATP binding site. Position 289 (Glu289) interacts with L-serine. 353-356 (EISS) provides a ligand contact to ATP. An L-serine-binding site is contributed by Ser389.

The protein belongs to the class-II aminoacyl-tRNA synthetase family. Type-1 seryl-tRNA synthetase subfamily. In terms of assembly, homodimer. The tRNA molecule binds across the dimer.

It is found in the cytoplasm. It catalyses the reaction tRNA(Ser) + L-serine + ATP = L-seryl-tRNA(Ser) + AMP + diphosphate + H(+). The catalysed reaction is tRNA(Sec) + L-serine + ATP = L-seryl-tRNA(Sec) + AMP + diphosphate + H(+). Its pathway is aminoacyl-tRNA biosynthesis; selenocysteinyl-tRNA(Sec) biosynthesis; L-seryl-tRNA(Sec) from L-serine and tRNA(Sec): step 1/1. Its function is as follows. Catalyzes the attachment of serine to tRNA(Ser). Is also able to aminoacylate tRNA(Sec) with serine, to form the misacylated tRNA L-seryl-tRNA(Sec), which will be further converted into selenocysteinyl-tRNA(Sec). This chain is Serine--tRNA ligase, found in Shewanella woodyi (strain ATCC 51908 / MS32).